A 408-amino-acid polypeptide reads, in one-letter code: Arginine biosynthesis bifunctional protein ArgJ 1 (408 aa).

Threonine 154, lysine 180, threonine 191, glutamate 277, asparagine 403, and serine 408 together coordinate substrate. Threonine 191 functions as the Nucleophile in the catalytic mechanism.

The protein belongs to the ArgJ family. In terms of assembly, heterotetramer of two alpha and two beta chains.

Its subcellular location is the cytoplasm. It catalyses the reaction N(2)-acetyl-L-ornithine + L-glutamate = N-acetyl-L-glutamate + L-ornithine. It carries out the reaction L-glutamate + acetyl-CoA = N-acetyl-L-glutamate + CoA + H(+). The protein operates within amino-acid biosynthesis; L-arginine biosynthesis; L-ornithine and N-acetyl-L-glutamate from L-glutamate and N(2)-acetyl-L-ornithine (cyclic): step 1/1. Its pathway is amino-acid biosynthesis; L-arginine biosynthesis; N(2)-acetyl-L-ornithine from L-glutamate: step 1/4. Functionally, catalyzes two activities which are involved in the cyclic version of arginine biosynthesis: the synthesis of N-acetylglutamate from glutamate and acetyl-CoA as the acetyl donor, and of ornithine by transacetylation between N(2)-acetylornithine and glutamate. This Clostridium acetobutylicum (strain ATCC 824 / DSM 792 / JCM 1419 / IAM 19013 / LMG 5710 / NBRC 13948 / NRRL B-527 / VKM B-1787 / 2291 / W) protein is Arginine biosynthesis bifunctional protein ArgJ 1.